Consider the following 263-residue polypeptide: HTH-type transcriptional repressor NanR (263 aa).

In terms of domain architecture, HTH gntR-type spans 30–98 (KKLSEMVEEE…NGERARVSRP (69 aa)). Residues 58–77 (ERELMAFFNVGRPSVREALA) constitute a DNA-binding region (H-T-H motif).

The protein belongs to the NanR family.

In terms of biological role, transcriptional repressor that controls expression of the genes required for the catabolism of sialic acids. This Salmonella arizonae (strain ATCC BAA-731 / CDC346-86 / RSK2980) protein is HTH-type transcriptional repressor NanR.